Consider the following 429-residue polypeptide: Glutamate-1-semialdehyde 2,1-aminomutase 1 (429 aa).

Lysine 268 is modified (N6-(pyridoxal phosphate)lysine).

This sequence belongs to the class-III pyridoxal-phosphate-dependent aminotransferase family. HemL subfamily. As to quaternary structure, homodimer. Pyridoxal 5'-phosphate serves as cofactor.

It is found in the cytoplasm. It catalyses the reaction (S)-4-amino-5-oxopentanoate = 5-aminolevulinate. It participates in porphyrin-containing compound metabolism; protoporphyrin-IX biosynthesis; 5-aminolevulinate from L-glutamyl-tRNA(Glu): step 2/2. The protein is Glutamate-1-semialdehyde 2,1-aminomutase 1 of Staphylococcus saprophyticus subsp. saprophyticus (strain ATCC 15305 / DSM 20229 / NCIMB 8711 / NCTC 7292 / S-41).